A 710-amino-acid polypeptide reads, in one-letter code: MSKQTFTTTFAGKPLVVEVGQVAKQANGATVVRYGDSTVLTAAVMSKKMATGDFFPLQVNYEEKMYAAGKFPGGFMKREGRPSTDATLTARLIDRPIRPMFAEGFRNEVQVINTVLSYDENASAPVAAMFGSSLALSISDIPFNGPIAGVQVGYIDGEFIINPDKEQMEASLLELTVAGSKEAINMVESGAKELSEDIMLEALLKGHQAIQELIAFQEQIVAVVGKEKAEVELLQVDADLQADIVAKYNAQLQKAVQVEEKKAREAATEAVKEMVKAEYEERYAEDENLATIMRDVAEILEQMEHAEVRRLITEDKIRPDGRKIDEIRPLDAVVDFLPKVHGSGLFTRGQTQALSVLTLAPMGETQIIDGLAPEYKKRFLHHYNFPQYSVGETGRYGAAGRREIGHGALGERALEQVLPSLEEFPYAIRLVAEVLESNGSSSQASICAGTLALMAGGVPIKAPVAGIAMGLISDGTNYTVLTDIQGLEDHFGDMDFKVAGTREGITALQMDIKIAGITPQILEEALAQAKKARFEILDVIEATIAEPRPELAPTAPKIDTIKIDVDKIKVVIGKGGETIDKIIAETGVKIDIDDEGNVSIYSSDQAAIDRTKEIIAGLVREAKVGEVYHAKVIRIEKFGAFVNLFDKTDALVHISEIAWTRTANVSDVLEVGEDVDVKVIKIDEKGRVDASMKALIPRPPKPEKKEEKHD.

Residues D489 and D495 each contribute to the Mg(2+) site. One can recognise a KH domain in the interval 556–615 (PKIDTIKIDVDKIKVVIGKGGETIDKIIAETGVKIDIDDEGNVSIYSSDQAAIDRTKEII). Positions 625-693 (GEVYHAKVIR…EKGRVDASMK (69 aa)) constitute an S1 motif domain. Residues 691-710 (SMKALIPRPPKPEKKEEKHD) form a disordered region. The span at 700–710 (PKPEKKEEKHD) shows a compositional bias: basic and acidic residues.

It belongs to the polyribonucleotide nucleotidyltransferase family. Mg(2+) serves as cofactor.

Its subcellular location is the cytoplasm. The enzyme catalyses RNA(n+1) + phosphate = RNA(n) + a ribonucleoside 5'-diphosphate. Its function is as follows. Involved in mRNA degradation. Catalyzes the phosphorolysis of single-stranded polyribonucleotides processively in the 3'- to 5'-direction. The polypeptide is Polyribonucleotide nucleotidyltransferase (Streptococcus pyogenes serotype M4 (strain MGAS10750)).